Consider the following 298-residue polypeptide: GTPase Era (298 aa).

One can recognise an Era-type G domain in the interval 3 to 170 (KSGFVAILGR…IKLLTDNLEE (168 aa)). Residues 11–18 (GRPNVGKS) form a G1 region. Residue 11–18 (GRPNVGKS) participates in GTP binding. The G2 stretch occupies residues 37–41 (QTTRN). A G3 region spans residues 58 to 61 (DTPG). GTP is bound by residues 58 to 62 (DTPGI) and 120 to 123 (NKID). Positions 120 to 123 (NKID) are G4. A G5 region spans residues 149–151 (ISA). The KH type-2 domain occupies 201-279 (TQQEVPHSVA…YLETWVKVKK (79 aa)).

It belongs to the TRAFAC class TrmE-Era-EngA-EngB-Septin-like GTPase superfamily. Era GTPase family. Monomer.

It is found in the cytoplasm. The protein resides in the cell membrane. Its function is as follows. An essential GTPase that binds both GDP and GTP, with rapid nucleotide exchange. Plays a role in 16S rRNA processing and 30S ribosomal subunit biogenesis and possibly also in cell cycle regulation and energy metabolism. This is GTPase Era from Streptococcus pyogenes serotype M4 (strain MGAS10750).